The sequence spans 1508 residues: Gem-associated protein 5 (1508 aa).

Residues 1-124 are important for interaction with U1 snRNA; that stretch reads MGQEPRTLPP…LHWSPRVKDL (124 aa). Residues 13-15 form an interaction with U4 snRNA region; that stretch reads NWY. At Ser-48 the chain carries Phosphoserine. Thr-51 carries the post-translational modification Phosphothreonine. WD repeat units follow at residues 62-104, 107-148, 150-189, 193-264, 280-321, 333-374, 377-417, 424-464, 468-509, 533-573, and 576-622; these read GHTE…VVTE, LHQH…QHLF, EPRT…EVIH, GHDD…GVMI, TVKE…RRKY, HSRI…CSWT, SLGG…NNYD, GVKS…PPQI, YHKK…IVLQ, KYKL…LICT, and QHHK…ESSP. A Phosphoserine modification is found at Ser-624. WD repeat units follow at residues 637–677 and 680–720; these read GHTA…PLCN and GHRG…HSRP. Residues 715–790 are disordered; the sequence is QDHSRPPQGK…EGEEQAREPE (76 aa). Residues 739–748 are compositionally biased toward basic residues; it reads AKPKKKKKPT. A Phosphothreonine modification is found at Thr-751. Lys-754 participates in a covalent cross-link: Glycyl lysine isopeptide (Lys-Gly) (interchain with G-Cter in SUMO2). 4 positions are modified to phosphoserine: Ser-757, Ser-770, Ser-778, and Ser-847. Disordered stretches follow at residues 1313–1343 and 1389–1428; these read EPSQ…ELDL and QKSQ…KNEP. Residues 1362–1393 adopt a coiled-coil conformation; sequence EKHASLQNSQRTVAEVQETLAEMIRQHQKSQL. The segment covering 1390–1399 has biased composition (polar residues); it reads KSQLCKSTAN.

It belongs to the WD repeat gemin-5 family. In terms of assembly, part of the core SMN complex that contains SMN1, GEMIN2/SIP1, DDX20/GEMIN3, GEMIN4, GEMIN5, GEMIN6, GEMIN7, GEMIN8 and STRAP/UNRIP. Part of the SMN-Sm complex that contains SMN1, GEMIN2/SIP1, DDX20/GEMIN3, GEMIN4, GEMIN5, GEMIN6, GEMIN7, GEMIN8, STRAP/UNRIP and the Sm proteins SNRPB, SNRPD1, SNRPD2, SNRPD3, SNRPE, SNRPF and SNRPG. Interacts with GEMIN2; the interaction is direct. Interacts with SMN1, SNRPB, SNRPD1, SNRPD2, SNRPD3 and SNRPE; the interaction is direct. Interacts with cytosolic DDX20/GEMIN3 and GEMIN4. Interacts with SNRNP70 and HNRNPU. Identified in a complex with 80S ribosomes; binds to the 60S large ribosomal subunit. Interacts with the ribosomal subunits RPL3 and RPL4.

Its subcellular location is the nucleus. It localises to the nucleoplasm. The protein resides in the gem. It is found in the cytoplasm. In terms of biological role, the SMN complex catalyzes the assembly of small nuclear ribonucleoproteins (snRNPs), the building blocks of the spliceosome, and thereby plays an important role in the splicing of cellular pre-mRNAs. Most spliceosomal snRNPs contain a common set of Sm proteins SNRPB, SNRPD1, SNRPD2, SNRPD3, SNRPE, SNRPF and SNRPG that assemble in a heptameric protein ring on the Sm site of the small nuclear RNA to form the core snRNP (Sm core). In the cytosol, the Sm proteins SNRPD1, SNRPD2, SNRPE, SNRPF and SNRPG are trapped in an inactive 6S pICln-Sm complex by the chaperone CLNS1A that controls the assembly of the core snRNP. To assemble core snRNPs, the SMN complex accepts the trapped 5Sm proteins from CLNS1A forming an intermediate. Binding of snRNA inside 5Sm ultimately triggers eviction of the SMN complex, thereby allowing binding of SNRPD3 and SNRPB to complete assembly of the core snRNP. Within the SMN complex, GEMIN5 recognizes and delivers the small nuclear RNAs (snRNAs) to the SMN complex. Binds to the 7-methylguanosine cap of RNA molecules. Binds to the 3'-UTR of SMN1 mRNA and regulates its translation; does not affect mRNA stability. May play a role in the regulation of protein synthesis via its interaction with ribosomes. This is Gem-associated protein 5 (GEMIN5) from Homo sapiens (Human).